Here is a 120-residue protein sequence, read N- to C-terminus: Testis-expressed protein 48 (120 aa).

Over residues 29-45 (KVPSQTQEHKPSTQNLL) the composition is skewed to polar residues. The interval 29 to 86 (KVPSQTQEHKPSTQNLLLQKDELDRQNPKRINAVSHLPSRTPLIQTKKSTSSSSSEFE) is disordered. Low complexity predominate over residues 74–83 (TKKSTSSSSS).

The sequence is that of Testis-expressed protein 48 from Homo sapiens (Human).